Consider the following 942-residue polypeptide: Nuclear receptor coactivator 7 (942 aa).

Met1 is modified (N-acetylmethionine). Positions 1 to 12 (MDTKEEKKERKQ) are enriched in basic and acidic residues. The tract at residues 1–46 (MDTKEEKKERKQSYFARLKKKKQAKQNAETASAVATRTHTGKEDNN) is disordered. Residues 4–29 (KEEKKERKQSYFARLKKKKQAKQNAE) adopt a coiled-coil conformation. The span at 25–38 (KQNAETASAVATRT) shows a compositional bias: polar residues. At Ser89 the chain carries Phosphoserine. The LysM domain occupies 114-157 (MEYTAGNQDTLNSIALKFNITPNKLVELNKLFTHTIVPGQVLFV). Thr134 carries the phosphothreonine modification. The tract at residues 161–188 (NSPSSTLRLSSSSPGATVSPSSSDAEYD) is disordered. A compositionally biased stretch (low complexity) spans 162 to 183 (SPSSTLRLSSSSPGATVSPSSS). 5 positions are modified to phosphoserine: Ser179, Ser183, Ser208, Ser209, and Ser211. Residues 324–416 (KFKSINKEKR…ENFLGEDDDF (93 aa)) form a disordered region. Residues 356–368 (GHTPTKPSGSSVS) are compositionally biased toward polar residues. Basic and acidic residues predominate over residues 369 to 381 (EKLKKLDSSRETS). A phosphoserine mark is found at Ser441, Ser500, and Ser502. In terms of domain architecture, TLDc spans 781 to 942 (ALLENMHIEQ…VQDLEVWAFD (162 aa)).

It belongs to the OXR1 family. Interacts with ESR1, ESR2A, ESR2B, THRB, PPARG and RARA in a ligand-inducible manner. Interacts with the heterodimer AHR-ARNT. As to expression, highly expressed in brain. Weakly expressed in mammary gland, ovary, uterus, prostate, stomach, bladder, spinal cord and pancreas. Expressed in cancer cell line.

The protein localises to the nucleus. Enhances the transcriptional activities of several nuclear receptors. Involved in the coactivation of different nuclear receptors, such as ESR1, THRB, PPARG and RARA. This Homo sapiens (Human) protein is Nuclear receptor coactivator 7 (NCOA7).